Consider the following 1469-residue polypeptide: WASH complex subunit 2 (1469 aa).

S136 carries the phosphoserine modification. Disordered regions lie at residues 178–349 (YDSK…RMPV) and 367–546 (KVQS…RVAG). Positions 197–206 (SDEKEPETKK) are enriched in basic and acidic residues. Position 227 is a phosphoserine (S227). Low complexity-rich tracts occupy residues 276–293 (SPPSDDPPSTSSSPTSSP) and 306–316 (STASLSSSSSS). The short motif at 351-372 (LFNEDEFKSFMSEIVDKVQSKT) is the LFa 1 element. The span at 370 to 385 (SKTPSSSVSPATTIST) shows a compositional bias: polar residues. Over residues 387-399 (EPPKTKKPVEEYP) the composition is skewed to basic and acidic residues. S422 and S426 each carry phosphoserine. Residues 519-528 (FDDDDLDIDD) show a composition bias toward acidic residues. The LFa 5 signature appears at 550 to 563 (LFEDDDQDDVTDLF). The segment at 571-591 (IPKETSSGVSPNKNVETPVAS) is disordered. The segment covering 574-585 (ETSSGVSPNKNV) has biased composition (polar residues). S580 bears the Phosphoserine mark. Residue T587 is modified to Phosphothreonine. Positions 595 to 605 (LFDDIEDEDLF) match the LFa 6 motif. Disordered stretches follow at residues 607–760 (TPKA…TDLF), 933–1254 (ALPN…KLFS), and 1316–1469 (VTTA…LDFK). 2 stretches are compositionally biased toward basic and acidic residues: residues 626–649 (GEDKKQSEIAEQKSKNIETGEKQH) and 671–687 (TEQKSDDKEWEAVKDDT). The residue at position 693 (T693) is a Phosphothreonine. An LFa 8 motif is present at residues 698–709 (LFSEDLTDDELF). 3 stretches are compositionally biased toward polar residues: residues 709 to 728 (FSSTSNNMAEPKSANETNEF), 735 to 745 (YTSQTEENVSP), and 938 to 956 (PSATKPSPVTPGDQPSVSS). Basic and acidic residues-rich tracts occupy residues 971 to 990 (DNDHAGEEVQKEAEPQKDEL), 1031 to 1042 (ETDRSEVKETPE), and 1077 to 1089 (RKQESSSSERDEP). Polar residues predominate over residues 1091 to 1109 (ATVQTEAEAPSSGQNTVSS). Basic residues predominate over residues 1118–1136 (NKSRARGPAKRRPSTRRGR). The segment covering 1159–1170 (DSPEVEHSERSS) has biased composition (basic and acidic residues). Phosphoserine is present on residues S1241, S1245, S1254, S1344, S1380, S1381, and S1408. Composition is skewed to low complexity over residues 1417 to 1426 (FGGSSTSKAA) and 1434 to 1452 (AARTASKPPASKTTTPTAT).

Belongs to the FAM21 family. In terms of assembly, component of the WASH complex.

Its function is as follows. Acts at least in part as component of the WASH complex which may regulate wash nucleation-promoting factor (NPF) activity and is required for its membrane targeting during endosomal sorting. This chain is WASH complex subunit 2, found in Drosophila melanogaster (Fruit fly).